The primary structure comprises 415 residues: Gamma-glutamyl phosphate reductase (415 aa).

This sequence belongs to the gamma-glutamyl phosphate reductase family.

Its subcellular location is the cytoplasm. It carries out the reaction L-glutamate 5-semialdehyde + phosphate + NADP(+) = L-glutamyl 5-phosphate + NADPH + H(+). The protein operates within amino-acid biosynthesis; L-proline biosynthesis; L-glutamate 5-semialdehyde from L-glutamate: step 2/2. Its function is as follows. Catalyzes the NADPH-dependent reduction of L-glutamate 5-phosphate into L-glutamate 5-semialdehyde and phosphate. The product spontaneously undergoes cyclization to form 1-pyrroline-5-carboxylate. This chain is Gamma-glutamyl phosphate reductase, found in Bacillus cereus (strain ATCC 10987 / NRS 248).